We begin with the raw amino-acid sequence, 612 residues long: tRNA 5-methylaminomethyl-2-thiouridine biosynthesis bifunctional protein MnmC (612 aa).

The segment at 1–218 (MITFRGDGLY…KREILEASLE (218 aa)) is tRNA (mnm(5)s(2)U34)-methyltransferase. The tract at residues 244-612 (IGAGVAGLAA…VRKLKRGLVR (369 aa)) is FAD-dependent cmnm(5)s(2)U34 oxidoreductase.

This sequence in the N-terminal section; belongs to the methyltransferase superfamily. tRNA (mnm(5)s(2)U34)-methyltransferase family. In the C-terminal section; belongs to the DAO family. Requires FAD as cofactor.

It is found in the cytoplasm. The catalysed reaction is 5-aminomethyl-2-thiouridine(34) in tRNA + S-adenosyl-L-methionine = 5-methylaminomethyl-2-thiouridine(34) in tRNA + S-adenosyl-L-homocysteine + H(+). Functionally, catalyzes the last two steps in the biosynthesis of 5-methylaminomethyl-2-thiouridine (mnm(5)s(2)U) at the wobble position (U34) in tRNA. Catalyzes the FAD-dependent demodification of cmnm(5)s(2)U34 to nm(5)s(2)U34, followed by the transfer of a methyl group from S-adenosyl-L-methionine to nm(5)s(2)U34, to form mnm(5)s(2)U34. The chain is tRNA 5-methylaminomethyl-2-thiouridine biosynthesis bifunctional protein MnmC from Campylobacter fetus subsp. fetus (strain 82-40).